A 350-amino-acid polypeptide reads, in one-letter code: tRNA N6-adenosine threonylcarbamoyltransferase (350 aa).

Fe cation contacts are provided by His-109 and His-113. Residues 136-140 (TVSGG), Asp-169, Gly-182, Asp-186, and Asn-284 contribute to the substrate site. A Fe cation-binding site is contributed by Asp-312.

Belongs to the KAE1 / TsaD family. Fe(2+) serves as cofactor.

The protein resides in the cytoplasm. The enzyme catalyses L-threonylcarbamoyladenylate + adenosine(37) in tRNA = N(6)-L-threonylcarbamoyladenosine(37) in tRNA + AMP + H(+). Its function is as follows. Required for the formation of a threonylcarbamoyl group on adenosine at position 37 (t(6)A37) in tRNAs that read codons beginning with adenine. Is involved in the transfer of the threonylcarbamoyl moiety of threonylcarbamoyl-AMP (TC-AMP) to the N6 group of A37, together with TsaE and TsaB. TsaD likely plays a direct catalytic role in this reaction. The protein is tRNA N6-adenosine threonylcarbamoyltransferase of Chlorobium chlorochromatii (strain CaD3).